The primary structure comprises 169 residues: Ribosome maturation factor RimM (169 aa).

Residues 97–169 (EDEYYWADLV…TITADWGLDY (73 aa)) form the PRC barrel domain.

The protein belongs to the RimM family. As to quaternary structure, binds ribosomal protein uS19.

The protein resides in the cytoplasm. An accessory protein needed during the final step in the assembly of 30S ribosomal subunit, possibly for assembly of the head region. Essential for efficient processing of 16S rRNA. May be needed both before and after RbfA during the maturation of 16S rRNA. It has affinity for free ribosomal 30S subunits but not for 70S ribosomes. The polypeptide is Ribosome maturation factor RimM (Neisseria gonorrhoeae (strain ATCC 700825 / FA 1090)).